The following is a 111-amino-acid chain: uncharacterized protein (111 aa).

Belongs to the asfivirus E111R family.

This is an uncharacterized protein from African swine fever virus (isolate Pig/Kenya/KEN-50/1950) (ASFV).